Consider the following 1358-residue polypeptide: MKAELVPVCTAWILGLLLCLGPAAAKVCGPNMDIRNDVSELKQLRDCVVIEGYLQILLISNAKAEDFRNLRFPNLTVITDYLLLFRVSGLVSLSNLFPNLTVIRGRVLFYNYALVIFEMTDLKEIGLYNLRNITRGAVRIEKNSELCYVSTVDWSLVLDAVYNNYIVGNKPPKECVDLCPGAREKMQICEKSSINNEFADRCWSDEHCQKVCPSVCGKRACSDNNECCHPECLGSCTAPDNDTACVACHHYFYEGRCVPTCPSNTYKFEGWRCITREVCAKMHIWIHSTIPFIIHKGECVYECPSGYMLNKSQSMTCSPCEGPCPKICEEKMKTIDSVTSAQMLEGCTVLKGNLQLNIRKGQNIAAELENFLGLIETVTGYVKIRHSHALVSLSFLKSLRYILGEEQMPGNYSFYVFDNNNLQQLWDWSKHNLTIKEGKIRFAFNSKLCASEIYRMEEVTGTKGRQAEEDISLSTNGNMASCESHVLNFTSRSKIKNRIKLTWERYRPPDYRDLISFTVYYKEAPFRNVTEYDGQDACGSNSWNMVDVDLPASKESDPGILLQGLKPWTQYAIYVKAITLTMLENRHIHGAKSKIIYMRTDAAVPSIPQDMISASNSSSQLVVKWNPPSLPNGNLSYYIVRWQQQPQDRHLYQYNYCFKDKVPNRKYANGTIDTEGGTEPTKPEGSVGEKGHYCACPKTEAEEKAEKDEAEYRKVFENFLHNSIFVPRPNRRRRDVLAVGNSTVTSYEKNSTTEDFSNFSDSERDDIEYPFYETKVDYKWERTVISNLQPFTLYRIDIHSCNHEAEKLGCSASNFVFARTMPAAGADDIPGIVNTKEEDDGVIFLGWPEPLRPNGLILMYEIEYKHQGEVHRECVSRQDYRKNGGIKLVRLPPGNYSAQVQAISLYGNGSWTEMVSFCVKLKPDVRNNILQMVVAIPLALSFLLVGIISIVCFVFKKRNSNRLGNGVLYASVNPEYFSAAEMYVPDKWEVPREKITMNRELGQGSFGMVYEGIAKGVVKDEAETKVAIKTVNEAASMRERIEFLNEASVMKEFNCHHVVRLLGVVSQGQPTLVIMELMTRGDLKSYLRSLRPDTESNSGQPTPSLKKMIQMAGEIADGMSYLNANKFVHRDLAARNCMVTEDFTVKIGDFGMTRDIYETDYYRKGGKGLLPVRWMSPESLKDGVFTTNSDVWSFGVVLWEIATLAEQPYQGMSNEQVLRFVMEGGLLEKPDNCPDMLFELMRMCWQFNPKMRPSFLEIISSIKDELDPGFKEVSFFYSEENKPPDTEELDLEAENMESIPLDPSCALQNSEHHAGHKSENGPGVVVLRASFDERQPYAHMNGGRKNERALPLPQSSAC.

The N-terminal stretch at 1 to 25 (MKAELVPVCTAWILGLLLCLGPAAA) is a signal peptide. A disulfide bridge links Cys-28 with Cys-47. Asn-74, Asn-99, and Asn-132 each carry an N-linked (GlcNAc...) asparagine glycan. Intrachain disulfides connect Cys-147–Cys-175, Cys-179–Cys-202, Cys-189–Cys-208, Cys-212–Cys-221, Cys-216–Cys-227, Cys-228–Cys-236, Cys-232–Cys-245, Cys-248–Cys-257, Cys-261–Cys-273, Cys-279–Cys-299, Cys-303–Cys-317, Cys-320–Cys-324, and Cys-328–Cys-347. Asn-241 is a glycosylation site (N-linked (GlcNAc...) asparagine). Asn-310 carries an N-linked (GlcNAc...) asparagine glycan. Asn-411 and Asn-432 each carry an N-linked (GlcNAc...) asparagine glycan. Cys-449 and Cys-482 form a disulfide bridge. Fibronectin type-III domains follow at residues 483 to 603 (ESHV…TDAA), 604 to 702 (VPSI…TEAE), 727 to 818 (PRPN…FVFA), and 829 to 924 (IPGI…LKPD). Asn-488, Asn-528, Asn-616, Asn-634, and Asn-669 each carry an N-linked (GlcNAc...) asparagine glycan. The tract at residues 670-691 (GTIDTEGGTEPTKPEGSVGEKG) is disordered. Residues 735 to 934 (DVLAVGNSTV…VRNNILQMVV (200 aa)) lie on the Extracellular side of the membrane. N-linked (GlcNAc...) asparagine glycosylation is found at Asn-741, Asn-750, Asn-758, Asn-895, and Asn-908. A helical membrane pass occupies residues 935–955 (AIPLALSFLLVGIISIVCFVF). The Cytoplasmic portion of the chain corresponds to 956–1358 (KKRNSNRLGN…ALPLPQSSAC (403 aa)). At Tyr-976 the chain carries Phosphotyrosine; by autocatalysis. Positions 995–1270 (ITMNRELGQG…SIKDELDPGF (276 aa)) constitute a Protein kinase domain. Residues 1001 to 1009 (LGQGSFGMV) and Lys-1029 contribute to the ATP site. Asp-1131 serves as the catalytic Proton acceptor. Phosphotyrosine; by autocatalysis occurs at positions 1157, 1161, and 1162. The tract at residues 1336-1358 (PYAHMNGGRKNERALPLPQSSAC) is disordered.

The protein belongs to the protein kinase superfamily. Tyr protein kinase family. Insulin receptor subfamily. In terms of assembly, tetramer of 2 alpha and 2 beta chains linked by disulfide bonds. The alpha chains contribute to the formation of the ligand-binding domain, while the beta chain carries the kinase domain. It depends on Mn(2+) as a cofactor. In terms of processing, the cytoplasmic domain of the beta subunit is autophosphorylated on Tyr residues in response to low concentrations of insulin-like growth factor (IGF1) and higher concentrations of insulin.

It localises to the cell membrane. The catalysed reaction is L-tyrosyl-[protein] + ATP = O-phospho-L-tyrosyl-[protein] + ADP + H(+). Autophosphorylation activates the kinase activity. Functionally, this receptor binds insulin-like growth factor 1 (IGF1) with a high affinity and IGF2 with a lower affinity. It has a tyrosine-protein kinase activity, which is necessary for the activation of the IGF1-stimulated downstream signaling cascade. Plays a role in oocyte maturation. Promotes head development by inhibiting Wnt signaling during embryogenesis. The sequence is that of Insulin-like growth factor 1 receptor (igf1r) from Xenopus laevis (African clawed frog).